The primary structure comprises 167 residues: NADH-ubiquinone oxidoreductase chain 6 (167 aa).

The next 5 membrane-spanning stretches (helical) occupy residues 1–21, 23–43, 47–67, 86–106, and 133–153; these read MVLM…VASN, SPYF…GMLM, MTFL…VVFA, VFSY…AFVG, and AGGY…LVVL.

The protein belongs to the complex I subunit 6 family.

It is found in the mitochondrion membrane. It catalyses the reaction a ubiquinone + NADH + 5 H(+)(in) = a ubiquinol + NAD(+) + 4 H(+)(out). Its function is as follows. Core subunit of the mitochondrial membrane respiratory chain NADH dehydrogenase (Complex I) that is believed to belong to the minimal assembly required for catalysis. Complex I functions in the transfer of electrons from NADH to the respiratory chain. The immediate electron acceptor for the enzyme is believed to be ubiquinone. In Polypterus ornatipinnis (Ornate bichir), this protein is NADH-ubiquinone oxidoreductase chain 6 (MT-ND6).